The following is a 358-amino-acid chain: Methionine aminopeptidase 2 (358 aa).

Substrate is bound at residue histidine 109. Aspartate 130, aspartate 141, and histidine 210 together coordinate a divalent metal cation. Residue histidine 218 coordinates substrate. Residues glutamate 243 and glutamate 339 each contribute to the a divalent metal cation site.

Belongs to the peptidase M24A family. Methionine aminopeptidase eukaryotic type 2 subfamily. Co(2+) is required as a cofactor. It depends on Zn(2+) as a cofactor. The cofactor is Mn(2+). Requires Fe(2+) as cofactor.

It localises to the cytoplasm. The catalysed reaction is Release of N-terminal amino acids, preferentially methionine, from peptides and arylamides.. Functionally, cotranslationally removes the N-terminal methionine from nascent proteins. The N-terminal methionine is often cleaved when the second residue in the primary sequence is small and uncharged (Met-Ala-, Cys, Gly, Pro, Ser, Thr, or Val). This is Methionine aminopeptidase 2 from Encephalitozoon cuniculi (strain GB-M1) (Microsporidian parasite).